A 555-amino-acid polypeptide reads, in one-letter code: Formate--tetrahydrofolate ligase (555 aa).

64–71 lines the ATP pocket; that stretch reads TKAGIGKT.

The protein belongs to the formate--tetrahydrofolate ligase family.

The catalysed reaction is (6S)-5,6,7,8-tetrahydrofolate + formate + ATP = (6R)-10-formyltetrahydrofolate + ADP + phosphate. Its pathway is one-carbon metabolism; tetrahydrofolate interconversion. This chain is Formate--tetrahydrofolate ligase, found in Bacteroides fragilis (strain ATCC 25285 / DSM 2151 / CCUG 4856 / JCM 11019 / LMG 10263 / NCTC 9343 / Onslow / VPI 2553 / EN-2).